Consider the following 278-residue polypeptide: 2-dehydro-3-deoxyphosphooctonate aldolase (278 aa).

Belongs to the KdsA family.

It localises to the cytoplasm. The catalysed reaction is D-arabinose 5-phosphate + phosphoenolpyruvate + H2O = 3-deoxy-alpha-D-manno-2-octulosonate-8-phosphate + phosphate. It functions in the pathway carbohydrate biosynthesis; 3-deoxy-D-manno-octulosonate biosynthesis; 3-deoxy-D-manno-octulosonate from D-ribulose 5-phosphate: step 2/3. Its pathway is bacterial outer membrane biogenesis; lipopolysaccharide biosynthesis. In Koribacter versatilis (strain Ellin345), this protein is 2-dehydro-3-deoxyphosphooctonate aldolase.